An 85-amino-acid polypeptide reads, in one-letter code: Small ribosomal subunit protein bS16c (85 aa).

The protein belongs to the bacterial ribosomal protein bS16 family.

The protein resides in the plastid. It is found in the chloroplast. The protein is Small ribosomal subunit protein bS16c of Saccharum hybrid (Sugarcane).